The sequence spans 67 residues: uncharacterized protein (67 aa).

This is an uncharacterized protein from Acidianus sp. F28 (AFV-2).